Consider the following 128-residue polypeptide: B2 protein (128 aa).

The N-terminal stretch at 1-10 (SLILLVAVQA) is a signal peptide. Disulfide bonds link C26–C57 and C97–C114.

This sequence belongs to the PBP/GOBP family. Post-translationally, N-glycosylated. Tubular accessory sex gland.

The protein localises to the secreted. Functionally, may be a carrier protein for lipids. This Tenebrio molitor (Yellow mealworm beetle) protein is B2 protein.